The primary structure comprises 209 residues: Thiamine-phosphate synthase (209 aa).

Residues 40-44 (QLREK) and N72 contribute to the 4-amino-2-methyl-5-(diphosphooxymethyl)pyrimidine site. Mg(2+) is bound by residues D73 and D92. Residue S111 participates in 4-amino-2-methyl-5-(diphosphooxymethyl)pyrimidine binding. 137-139 (TNS) contacts 2-[(2R,5Z)-2-carboxy-4-methylthiazol-5(2H)-ylidene]ethyl phosphate. K140 contributes to the 4-amino-2-methyl-5-(diphosphooxymethyl)pyrimidine binding site. 2-[(2R,5Z)-2-carboxy-4-methylthiazol-5(2H)-ylidene]ethyl phosphate is bound by residues G167 and 187-188 (IS).

It belongs to the thiamine-phosphate synthase family. Requires Mg(2+) as cofactor.

It catalyses the reaction 2-[(2R,5Z)-2-carboxy-4-methylthiazol-5(2H)-ylidene]ethyl phosphate + 4-amino-2-methyl-5-(diphosphooxymethyl)pyrimidine + 2 H(+) = thiamine phosphate + CO2 + diphosphate. The catalysed reaction is 2-(2-carboxy-4-methylthiazol-5-yl)ethyl phosphate + 4-amino-2-methyl-5-(diphosphooxymethyl)pyrimidine + 2 H(+) = thiamine phosphate + CO2 + diphosphate. The enzyme catalyses 4-methyl-5-(2-phosphooxyethyl)-thiazole + 4-amino-2-methyl-5-(diphosphooxymethyl)pyrimidine + H(+) = thiamine phosphate + diphosphate. The protein operates within cofactor biosynthesis; thiamine diphosphate biosynthesis; thiamine phosphate from 4-amino-2-methyl-5-diphosphomethylpyrimidine and 4-methyl-5-(2-phosphoethyl)-thiazole: step 1/1. Its function is as follows. Condenses 4-methyl-5-(beta-hydroxyethyl)thiazole monophosphate (THZ-P) and 2-methyl-4-amino-5-hydroxymethyl pyrimidine pyrophosphate (HMP-PP) to form thiamine monophosphate (TMP). The chain is Thiamine-phosphate synthase from Clostridium tetani (strain Massachusetts / E88).